Here is a 315-residue protein sequence, read N- to C-terminus: Tetratricopeptide repeat protein 23-like (315 aa).

Residues 28–56 are disordered; it reads KIPEHQRTDESSPTSGSEESEEDTKAKEK. Coiled-coil stretches lie at residues 65–90, 179–200, and 250–280; these read REKL…ANKE, REAY…ESYK, and SELV…HQAH.

It localises to the cytoplasm. The protein localises to the cytoskeleton. The protein resides in the microtubule organizing center. It is found in the centrosome. Its subcellular location is the spindle. It localises to the midbody. The sequence is that of Tetratricopeptide repeat protein 23-like (TTC23L) from Bos taurus (Bovine).